The primary structure comprises 197 residues: Stanniocalcin-2 (197 aa).

Residues 1-20 (TDAXNPPEGPQDRGSQQKGR) form a disordered region.

Belongs to the stanniocalcin family. In terms of assembly, homodimer; disulfide-linked.

The protein resides in the secreted. Has an anti-hypocalcemic action on calcium and phosphate homeostasis. In Cavia porcellus (Guinea pig), this protein is Stanniocalcin-2 (STC2).